A 188-amino-acid chain; its full sequence is Elongation factor P (188 aa).

The residue at position 34 (lysine 34) is an N6-(3,6-diaminohexanoyl)-5-hydroxylysine.

Belongs to the elongation factor P family. May be beta-lysylated on the epsilon-amino group of Lys-34 by the combined action of EpmA and EpmB, and then hydroxylated on the C5 position of the same residue by EpmC (if this protein is present). Lysylation is critical for the stimulatory effect of EF-P on peptide-bond formation. The lysylation moiety may extend toward the peptidyltransferase center and stabilize the terminal 3-CCA end of the tRNA. Hydroxylation of the C5 position on Lys-34 may allow additional potential stabilizing hydrogen-bond interactions with the P-tRNA.

The protein localises to the cytoplasm. It functions in the pathway protein biosynthesis; polypeptide chain elongation. Functionally, involved in peptide bond synthesis. Alleviates ribosome stalling that occurs when 3 or more consecutive Pro residues or the sequence PPG is present in a protein, possibly by augmenting the peptidyl transferase activity of the ribosome. Modification of Lys-34 is required for alleviation. In Pasteurella multocida (strain Pm70), this protein is Elongation factor P.